The sequence spans 684 residues: 77 kDa membrane protein (684 aa).

The signal sequence occupies residues Met-1–Ala-30. MAP repeat units follow at residues Gly-45 to Lys-154, Asp-156 to Ala-265, Lys-266 to Arg-374, Tyr-375 to Lys-474, Ala-475 to Asn-584, and Ser-586 to Phe-684.

Its subcellular location is the cell membrane. Its function is as follows. Binds various plasma and ECM-proteins. This is 77 kDa membrane protein from Staphylococcus aureus (strain COL).